Consider the following 167-residue polypeptide: Protein tyrosine phosphatase type IVA 2 (167 aa).

The 154-residue stretch at 5-158 (APVEISYENM…YRPKMRLRFR (154 aa)) folds into the Tyrosine-protein phosphatase domain. An intrachain disulfide couples Cys46 to Cys101. Residue Asp69 is the Proton donor of the active site. Cys101 acts as the Phosphocysteine intermediate in catalysis. Residue 102-107 (VAGLGR) participates in phosphate binding. Arg107 contacts substrate. A Cysteine methyl ester modification is found at Cys164. A lipid anchor (S-farnesyl cysteine) is attached at Cys164. Positions 165 to 167 (CVQ) are cleaved as a propeptide — removed in mature form.

This sequence belongs to the protein-tyrosine phosphatase family. As to quaternary structure, in contrast to PTP4A1 and PTP4A3, does not interact with tubulin. Interacts with RABGGTB. In terms of processing, farnesylated. Farnesylation is required for membrane targeting and for interaction with RABGGTB. Expressed in skeletal muscle, and at lower levels in liver, lung, heart, kidney, brain, testis and spleen.

The protein resides in the cell membrane. It is found in the early endosome. The protein localises to the cytoplasm. The catalysed reaction is O-phospho-L-tyrosyl-[protein] + H2O = L-tyrosyl-[protein] + phosphate. Its activity is regulated as follows. Inhibited by sodium orthovanadate and pentamidine. Protein tyrosine phosphatase which stimulates progression from G1 into S phase during mitosis. Inhibits geranylgeranyl transferase type II activity by blocking the association between RABGGTA and RABGGTB. The polypeptide is Protein tyrosine phosphatase type IVA 2 (Ptp4a2) (Mus musculus (Mouse)).